Consider the following 192-residue polypeptide: Large ribosomal subunit protein bL25 (192 aa).

This sequence belongs to the bacterial ribosomal protein bL25 family. CTC subfamily. Part of the 50S ribosomal subunit; part of the 5S rRNA/L5/L18/L25 subcomplex. Contacts the 5S rRNA. Binds to the 5S rRNA independently of L5 and L18.

Its function is as follows. This is one of the proteins that binds to the 5S RNA in the ribosome where it forms part of the central protuberance. In Solidesulfovibrio magneticus (strain ATCC 700980 / DSM 13731 / RS-1) (Desulfovibrio magneticus), this protein is Large ribosomal subunit protein bL25.